The following is a 212-amino-acid chain: Uridine kinase (212 aa).

13 to 20 provides a ligand contact to ATP; the sequence is GASASGKS.

Belongs to the uridine kinase family.

It is found in the cytoplasm. It carries out the reaction uridine + ATP = UMP + ADP + H(+). It catalyses the reaction cytidine + ATP = CMP + ADP + H(+). The protein operates within pyrimidine metabolism; CTP biosynthesis via salvage pathway; CTP from cytidine: step 1/3. Its pathway is pyrimidine metabolism; UMP biosynthesis via salvage pathway; UMP from uridine: step 1/1. In Shewanella baltica (strain OS155 / ATCC BAA-1091), this protein is Uridine kinase.